The following is a 76-amino-acid chain: Protein KleC (76 aa).

It to E.coli KleA (KcrA1).

In Escherichia coli, this protein is Protein KleC (kleC).